The chain runs to 151 residues: Small ribosomal subunit protein uS15 (151 aa).

Lysine 27 carries the post-translational modification N6-acetyllysine; alternate. The residue at position 27 (lysine 27) is an N6-succinyllysine; alternate. A Glycyl lysine isopeptide (Lys-Gly) (interchain with G-Cter in ubiquitin) cross-link involves residue lysine 27. Serine 30 bears the Phosphoserine mark. N6-succinyllysine is present on lysine 34. Residue tyrosine 38 is modified to Phosphotyrosine. Lysine 43 participates in a covalent cross-link: Glycyl lysine isopeptide (Lys-Gly) (interchain with G-Cter in SUMO2).

It belongs to the universal ribosomal protein uS15 family. As to quaternary structure, component of the small ribosomal subunit. Part of the small subunit (SSU) processome, composed of more than 70 proteins and the RNA chaperone small nucleolar RNA (snoRNA) U3. Post-translationally, ubiquitinated at Lys-27 by RNF14 and RNF25 in response to ribosome collisions (ribosome stalling).

The protein resides in the cytoplasm. Its subcellular location is the nucleus. The protein localises to the nucleolus. Its function is as follows. Component of the small ribosomal subunit. The ribosome is a large ribonucleoprotein complex responsible for the synthesis of proteins in the cell. Part of the small subunit (SSU) processome, first precursor of the small eukaryotic ribosomal subunit. During the assembly of the SSU processome in the nucleolus, many ribosome biogenesis factors, an RNA chaperone and ribosomal proteins associate with the nascent pre-rRNA and work in concert to generate RNA folding, modifications, rearrangements and cleavage as well as targeted degradation of pre-ribosomal RNA by the RNA exosome. This chain is Small ribosomal subunit protein uS15, found in Homo sapiens (Human).